Consider the following 360-residue polypeptide: Photosystem II protein D1 2 (360 aa).

3 consecutive transmembrane segments (helical) span residues 29-46 (YIGWFGVLMVPTLLSATI), 118-133 (HFLIGIFAYLGREWEF), and 142-156 (WICVAYSAPVAAATA). Chlorophyll a is bound at residue His118. Pheophytin a is bound at residue Tyr126. Residues Asp170 and Glu189 each coordinate [CaMn4O5] cluster. The helical transmembrane segment at 197–218 (LHMFGVAGVFGGSLFAAMHGSL) threads the bilayer. His198 is a binding site for chlorophyll a. A quinone-binding positions include His215 and 264 to 265 (SF). Residue His215 participates in Fe cation binding. Fe cation is bound at residue His272. Residues 274-288 (FLAAWPVIGIWLTSL) form a helical membrane-spanning segment. Residues His332, Glu333, Asp342, and Ala344 each contribute to the [CaMn4O5] cluster site. The propeptide occupies 345–360 (GTESAPVAFAAALGDG).

It belongs to the reaction center PufL/M/PsbA/D family. In terms of assembly, PSII is composed of 1 copy each of membrane proteins PsbA, PsbB, PsbC, PsbD, PsbE, PsbF, PsbH, PsbI, PsbJ, PsbK, PsbL, PsbM, PsbT, PsbX, Psb30/Ycf12, peripheral proteins PsbO, CyanoQ (PsbQ), PsbU, PsbV and a large number of cofactors. It forms dimeric complexes. It depends on The D1/D2 heterodimer binds P680, chlorophylls that are the primary electron donor of PSII, and subsequent electron acceptors. It shares a non-heme iron and each subunit binds pheophytin, quinone, additional chlorophylls, carotenoids and lipids. D1 provides most of the ligands for the Mn4-Ca-O5 cluster of the oxygen-evolving complex (OEC). There is also a Cl(-1) ion associated with D1 and D2, which is required for oxygen evolution. The PSII complex binds additional chlorophylls, carotenoids and specific lipids. as a cofactor. Post-translationally, tyr-161 forms a radical intermediate that is referred to as redox-active TyrZ, YZ or Y-Z. In terms of processing, C-terminally processed by CtpA; processing is essential to allow assembly of the oxygen-evolving complex and thus photosynthetic growth.

The protein resides in the cell inner membrane. The enzyme catalyses 2 a plastoquinone + 4 hnu + 2 H2O = 2 a plastoquinol + O2. Photosystem II (PSII) is a light-driven water:plastoquinone oxidoreductase that uses light energy to abstract electrons from H(2)O, generating O(2) and a proton gradient subsequently used for ATP formation. It consists of a core antenna complex that captures photons, and an electron transfer chain that converts photonic excitation into a charge separation. The D1/D2 (PsbA/PsbD) reaction center heterodimer binds P680, the primary electron donor of PSII as well as several subsequent electron acceptors. The protein is Photosystem II protein D1 2 of Gloeobacter violaceus (strain ATCC 29082 / PCC 7421).